The sequence spans 351 residues: Histidine-rich glycoprotein (351 aa).

The first 23 residues, 1–23 (MFTSLKKVATFSFLVWISQYSGS), serve as a signal peptide directing secretion. Positions 24-47 (NSCSSSLVKHIPQTGSNLTFDRVL) are excised as a propeptide. The N-linked (GlcNAc...) asparagine glycan is linked to Asn40. Over residues 57–91 (LHEEHHHHHPEEHHEPHHEEHHHHHPEEHHEPHHE) the composition is skewed to basic and acidic residues. The disordered stretch occupies residues 57–351 (LHEEHHHHHP…DAHHHHHHHH (295 aa)). 6 tandem repeats follow at residues 59 to 74 (EEHHHHHPEEHHEPHH), 75 to 90 (EEHHHHHPEEHHEPHH), 91 to 107 (EEHHHHHPHPHHHHHHH), 108 to 123 (PPHHHHHLGHHHHHHH), 124 to 138 (AAHHHHHEEHHHHHH), and 139 to 153 (AAHHHHHEEHHHHHH). The interval 59 to 90 (EEHHHHHPEEHHEPHHEEHHHHHPEEHHEPHH) is 2 X 16 AA tandem repeats. The 2 X 17 AA tandem repeats stretch occupies residues 91–123 (EEHHHHHPHPHHHHHHHPPHHHHHLGHHHHHHH). Positions 92–351 (EHHHHHPHPH…DAHHHHHHHH (260 aa)) are enriched in basic residues. The 2 X 15 AA tandem repeats stretch occupies residues 124-153 (AAHHHHHEEHHHHHHAAHHHHHEEHHHHHH). The 18 X 10 AA tandem repeats stretch occupies residues 173-351 (APHHHHHHHH…DAHHHHHHHH (179 aa)).

This Plasmodium lophurae protein is Histidine-rich glycoprotein.